Consider the following 496-residue polypeptide: Inosine-5'-monophosphate dehydrogenase (496 aa).

2 consecutive CBS domains span residues 96–152 and 156–212; these read VIKD…TKKV and MTKD…PQAA. NAD(+) is bound by residues Asp247 and 299–301; that span reads GIG. K(+) is bound by residues Gly301 and Gly303. IMP is bound at residue Ser304. Cys306 contacts K(+). Cys306 acts as the Thioimidate intermediate in catalysis. IMP is bound by residues 339 to 341, 362 to 363, and 386 to 390; these read DGG, GS, and YRGMG. The Proton acceptor role is filled by Arg405. Glu423 serves as a coordination point for IMP. Residues Glu477, Ser478, and His479 each contribute to the K(+) site.

It belongs to the IMPDH/GMPR family. In terms of assembly, homotetramer. It depends on K(+) as a cofactor.

It catalyses the reaction IMP + NAD(+) + H2O = XMP + NADH + H(+). Its pathway is purine metabolism; XMP biosynthesis via de novo pathway; XMP from IMP: step 1/1. With respect to regulation, mycophenolic acid (MPA) is a non-competitive inhibitor that prevents formation of the closed enzyme conformation by binding to the same site as the amobile flap. In contrast, mizoribine monophosphate (MZP) is a competitive inhibitor that induces the closed conformation. MPA is a potent inhibitor of mammalian IMPDHs but a poor inhibitor of the bacterial enzymes. MZP is a more potent inhibitor of bacterial IMPDH. Its function is as follows. Catalyzes the conversion of inosine 5'-phosphate (IMP) to xanthosine 5'-phosphate (XMP), the first committed and rate-limiting step in the de novo synthesis of guanine nucleotides, and therefore plays an important role in the regulation of cell growth. The chain is Inosine-5'-monophosphate dehydrogenase from Methanocaldococcus jannaschii (strain ATCC 43067 / DSM 2661 / JAL-1 / JCM 10045 / NBRC 100440) (Methanococcus jannaschii).